The chain runs to 295 residues: Fatty acyl-CoA reductase (295 aa).

21-28 contributes to the NADP(+) binding site; that stretch reads TGASSGIG. Residue Ser153 coordinates substrate. Tyr166 (proton acceptor) is an active-site residue.

It belongs to the short-chain dehydrogenases/reductases (SDR) family.

It catalyses the reaction hexadecanal + NADP(+) + CoA = hexadecanoyl-CoA + NADPH + H(+). Functionally, catalyzes the NADPH-dependent reduction of long chain acyl-CoA (with chain lengths of 14 to 22 carbons) to the corresponding aldehyde. The chain is Fatty acyl-CoA reductase (acr1) from Acinetobacter baylyi (strain ATCC 33305 / BD413 / ADP1).